The following is a 436-amino-acid chain: Trigger factor (436 aa).

Residues 163–248 (GDQVIIDFVG…VHSVQTKVLP (86 aa)) form the PPIase FKBP-type domain.

It belongs to the FKBP-type PPIase family. Tig subfamily.

It is found in the cytoplasm. It catalyses the reaction [protein]-peptidylproline (omega=180) = [protein]-peptidylproline (omega=0). Its function is as follows. Involved in protein export. Acts as a chaperone by maintaining the newly synthesized protein in an open conformation. Functions as a peptidyl-prolyl cis-trans isomerase. The polypeptide is Trigger factor (Hydrogenovibrio crunogenus (strain DSM 25203 / XCL-2) (Thiomicrospira crunogena)).